Here is a 451-residue protein sequence, read N- to C-terminus: MCSTREEITEAFASLATALSRVLGLTFDALTTPERLALLEHCETARRQLPSVEHTLINQIGEQSTEEELGGKLGLTLADRLRITRSEAKRRVAEAADLGQRRALTGEPLPPLLTATAKAQRHGLIGDGHVEVIRAFVHRLPSWVDLKTLEKAERDLAKQATQYRPDQLAKLAARIMDCLNPDGDYTDEDRARRRGLTLGKQDVDGMSRLSGYVTPELRATIEAVWAKLAAPGMCNPEQKAPCVNGAPSKEQARRDTRSCPQRNHDALNAELRSLLTSGNLGQHNGLPASIIVTTTLKDLEAAAGAGLTGGGTILPISDVIRLARHANHYLAIFDRGKALALYHTKRLASPAQRIMLYAKDSGCSAPGCDVPGYYCEVHHVTPYAQCRNTDVNDLTLGCGGHHPLAERGWTTRKNAHGDTEWLPPPHLDHGQPRVNTFHHPEKLLADDEGDP.

Residues 415 to 435 (AHGDTEWLPPPHLDHGQPRVN) form a disordered region.

It belongs to the Rv1128c/1148c/1588c/1702c/1945/3466 family.

This is an uncharacterized protein from Mycobacterium tuberculosis (strain ATCC 25618 / H37Rv).